The primary structure comprises 513 residues: Histidine ammonia-lyase (513 aa).

Residues 142–144 (ASG) constitute a cross-link (5-imidazolinone (Ala-Gly)). The residue at position 143 (serine 143) is a 2,3-didehydroalanine (Ser).

This sequence belongs to the PAL/histidase family. In terms of processing, contains an active site 4-methylidene-imidazol-5-one (MIO), which is formed autocatalytically by cyclization and dehydration of residues Ala-Ser-Gly.

Its subcellular location is the cytoplasm. It catalyses the reaction L-histidine = trans-urocanate + NH4(+). It functions in the pathway amino-acid degradation; L-histidine degradation into L-glutamate; N-formimidoyl-L-glutamate from L-histidine: step 1/3. This Roseobacter denitrificans (strain ATCC 33942 / OCh 114) (Erythrobacter sp. (strain OCh 114)) protein is Histidine ammonia-lyase.